The sequence spans 94 residues: Small ribosomal subunit protein uS19 (94 aa).

This sequence belongs to the universal ribosomal protein uS19 family.

Functionally, protein S19 forms a complex with S13 that binds strongly to the 16S ribosomal RNA. In Finegoldia magna (strain ATCC 29328 / DSM 20472 / WAL 2508) (Peptostreptococcus magnus), this protein is Small ribosomal subunit protein uS19.